A 279-amino-acid polypeptide reads, in one-letter code: Putative pyruvate, phosphate dikinase regulatory protein (279 aa).

Residue 152–159 (GVSRTSKS) coordinates ADP.

It belongs to the pyruvate, phosphate/water dikinase regulatory protein family. PDRP subfamily.

The enzyme catalyses N(tele)-phospho-L-histidyl/L-threonyl-[pyruvate, phosphate dikinase] + ADP = N(tele)-phospho-L-histidyl/O-phospho-L-threonyl-[pyruvate, phosphate dikinase] + AMP + H(+). The catalysed reaction is N(tele)-phospho-L-histidyl/O-phospho-L-threonyl-[pyruvate, phosphate dikinase] + phosphate + H(+) = N(tele)-phospho-L-histidyl/L-threonyl-[pyruvate, phosphate dikinase] + diphosphate. Bifunctional serine/threonine kinase and phosphorylase involved in the regulation of the pyruvate, phosphate dikinase (PPDK) by catalyzing its phosphorylation/dephosphorylation. The sequence is that of Putative pyruvate, phosphate dikinase regulatory protein from Anaplasma marginale (strain Florida).